The sequence spans 129 residues: Glycine cleavage system H protein (129 aa).

The region spanning 23–104 (SVTVGITHHA…AYTAWLFKIK (82 aa)) is the Lipoyl-binding domain. The residue at position 64 (Lys64) is an N6-lipoyllysine.

Belongs to the GcvH family. As to quaternary structure, the glycine cleavage system is composed of four proteins: P, T, L and H. It depends on (R)-lipoate as a cofactor.

In terms of biological role, the glycine cleavage system catalyzes the degradation of glycine. The H protein shuttles the methylamine group of glycine from the P protein to the T protein. The chain is Glycine cleavage system H protein from Thiobacillus denitrificans (strain ATCC 25259 / T1).